The chain runs to 732 residues: Coagulation factor XIII A chain (732 aa).

The disordered stretch occupies residues 1-27; sequence MSETSRTAFGGRRAVPPNNSNAAEDDL. Ser2 bears the N-acetylserine mark. A propeptide spans 2–38 (activation peptide); that stretch reads SETSRTAFGGRRAVPPNNSNAAEDDLPTVELQGVVPR. Catalysis depends on residues Cys315, His374, and Asp397. The Ca(2+) site is built by Asn437, Asp439, Glu486, and Glu491. N-linked (GlcNAc...) asparagine glycosylation is present at Asn614.

The protein belongs to the transglutaminase superfamily. Transglutaminase family. As to quaternary structure, tetramer of two A chains (F13A1) and two B (F13B) chains. Ca(2+) is required as a cofactor. The activation peptide is released by thrombin.

It is found in the cytoplasm. Its subcellular location is the secreted. The catalysed reaction is L-glutaminyl-[protein] + L-lysyl-[protein] = [protein]-L-lysyl-N(6)-5-L-glutamyl-[protein] + NH4(+). Its function is as follows. Factor XIII is activated by thrombin and calcium ion to a transglutaminase that catalyzes the formation of gamma-glutamyl-epsilon-lysine cross-links between fibrin chains, thus stabilizing the fibrin clot. Also cross-link alpha-2-plasmin inhibitor, or fibronectin, to the alpha chains of fibrin. The chain is Coagulation factor XIII A chain (F13A1) from Homo sapiens (Human).